The primary structure comprises 121 residues: Glycine cleavage system H protein (121 aa).

Residues 16-98 form the Lipoyl-binding domain; the sequence is VATVGITAYA…ESGGWFAKIK (83 aa). At lysine 57 the chain carries N6-lipoyllysine.

This sequence belongs to the GcvH family. The glycine cleavage system is composed of four proteins: P, T, L and H. Requires (R)-lipoate as cofactor.

In terms of biological role, the glycine cleavage system catalyzes the degradation of glycine. The H protein shuttles the methylamine group of glycine from the P protein to the T protein. This chain is Glycine cleavage system H protein, found in Caulobacter vibrioides (strain NA1000 / CB15N) (Caulobacter crescentus).